The sequence spans 258 residues: Pimeloyl-[acyl-carrier protein] methyl ester esterase (258 aa).

Positions 16 to 242 (LVLLHGWGLN…AAHAPFISHP (227 aa)) constitute an AB hydrolase-1 domain. Substrate is bound by residues tryptophan 22, 82–83 (SM), and 143–147 (FLALQ). Catalysis depends on serine 82, which acts as the Nucleophile. Catalysis depends on residues aspartate 207 and histidine 235. Residue histidine 235 coordinates substrate.

The protein belongs to the AB hydrolase superfamily. Carboxylesterase BioH family. Monomer.

The protein localises to the cytoplasm. It carries out the reaction 6-carboxyhexanoyl-[ACP] methyl ester + H2O = 6-carboxyhexanoyl-[ACP] + methanol + H(+). Its pathway is cofactor biosynthesis; biotin biosynthesis. Functionally, the physiological role of BioH is to remove the methyl group introduced by BioC when the pimeloyl moiety is complete. It allows to synthesize pimeloyl-ACP via the fatty acid synthetic pathway through the hydrolysis of the ester bonds of pimeloyl-ACP esters. The chain is Pimeloyl-[acyl-carrier protein] methyl ester esterase from Yersinia pseudotuberculosis serotype IB (strain PB1/+).